Reading from the N-terminus, the 956-residue chain is ATPase 11, plasma membrane-type (956 aa).

Over 1–65 (MGDKEEVLEA…EKKESKFLKF (65 aa)) the chain is Cytoplasmic. A helical membrane pass occupies residues 66–85 (LGFMWNPLSWVMEAAAIMAI). At 86–97 (ALANGGGKPPDW) the chain is on the extracellular side. Residues 98 to 118 (QDFVGIITLLVINSTISFIEE) form a helical membrane-spanning segment. The Cytoplasmic segment spans residues 119–247 (NNAGNAAAAL…GHFQQVLTAI (129 aa)). Residues 248–268 (GNFCICSIAVGMIIEIVVMYP) traverse the membrane as a helical segment. Residues 269-277 (IQHRAYRPG) are Extracellular-facing. Residues 278–295 (IDNLLVLLIGGIPIAMPT) traverse the membrane as a helical segment. Residues 296–647 (VLSVTMAIGS…TSRAIFQRMK (352 aa)) are Cytoplasmic-facing. Aspartate 333 (4-aspartylphosphate intermediate) is an active-site residue. Aspartate 592 and aspartate 596 together coordinate Mg(2+). The chain crosses the membrane as a helical span at residues 648-669 (NYTIYAVSITIRIVLGFMLLAL). The Extracellular portion of the chain corresponds to 670–674 (IWKFD). A helical transmembrane segment spans residues 675–697 (FPPFMVLIIAILNDGTIMTISKD). Residues 698–713 (RVKPSPLPDSWKLSEI) are Cytoplasmic-facing. A helical transmembrane segment spans residues 714–734 (FATGVVFGSYMAMMTVIFFWA). The Extracellular portion of the chain corresponds to 735 to 759 (AYKTDFFPRTFGVSTLEKTAHDDFR). A helical membrane pass occupies residues 760–780 (KLASAIYLQVSIISQALIFVT). Over 781 to 792 (RSRSWSYVERPG) the chain is Cytoplasmic. Residues 793 to 813 (MLLVVAFILAQLVATLIAVYA) form a helical membrane-spanning segment. The Extracellular segment spans residues 814–821 (NWSFAAIE). The chain crosses the membrane as a helical span at residues 822-842 (GIGWGWAGVIWLYNIVFYIPL). The Cytoplasmic portion of the chain corresponds to 843–956 (DIIKFLIRYA…IETIQQAYTV (114 aa)). Threonine 889 bears the Phosphothreonine mark. Serine 938 is subject to Phosphoserine. Residues 954–956 (YTV) form an interaction with 14-3-3 proteins region. Position 955 is a phosphothreonine (threonine 955).

The protein belongs to the cation transport ATPase (P-type) (TC 3.A.3) family. Type IIIA subfamily. In terms of assembly, binds to 14-3-3 proteins. The binding is induced by phosphorylation of Thr-955. Binding to 14-3-3 proteins activates the H(+)-ATPase. As to expression, expressed in guard cells, mesophyll cells, leaves and roots.

Its subcellular location is the membrane. It carries out the reaction ATP + H2O + H(+)(in) = ADP + phosphate + 2 H(+)(out). The plasma membrane H(+) ATPase of plants and fungi generates a proton gradient that drives the active transport of nutrients by H(+)-symport. The resulting external acidification and/or internal alkinization may mediate growth responses. The sequence is that of ATPase 11, plasma membrane-type (AHA11) from Arabidopsis thaliana (Mouse-ear cress).